A 252-amino-acid polypeptide reads, in one-letter code: 5'-nucleotidase SurE (252 aa).

Residues D8, D9, S40, and N93 each contribute to the a divalent metal cation site.

It belongs to the SurE nucleotidase family. The cofactor is a divalent metal cation.

Its subcellular location is the cytoplasm. The catalysed reaction is a ribonucleoside 5'-phosphate + H2O = a ribonucleoside + phosphate. Nucleotidase that shows phosphatase activity on nucleoside 5'-monophosphates. The chain is 5'-nucleotidase SurE from Erythrobacter litoralis (strain HTCC2594).